The chain runs to 299 residues: GTPase Era (299 aa).

The 169-residue stretch at 9–177 folds into the Era-type G domain; the sequence is RSGSVAVIGR…VGDLLKLVPE (169 aa). Positions 17 to 24 are G1; that stretch reads GRPNVGKS. 17–24 serves as a coordination point for GTP; sequence GRPNVGKS. Residues 43–47 form a G2 region; the sequence is QTTRH. The tract at residues 64-67 is G3; that stretch reads DTPG. Residues 64 to 68 and 126 to 129 each bind GTP; these read DTPGL and NKVD. A G4 region spans residues 126 to 129; the sequence is NKVD. A G5 region spans residues 156–158; it reads VSA. A KH type-2 domain is found at 200 to 284; it reads VREQLMRQLG…FLETWVRVRE (85 aa).

Belongs to the TRAFAC class TrmE-Era-EngA-EngB-Septin-like GTPase superfamily. Era GTPase family. In terms of assembly, monomer.

The protein resides in the cytoplasm. The protein localises to the cell inner membrane. Functionally, an essential GTPase that binds both GDP and GTP, with rapid nucleotide exchange. Plays a role in 16S rRNA processing and 30S ribosomal subunit biogenesis and possibly also in cell cycle regulation and energy metabolism. The protein is GTPase Era of Xanthomonas axonopodis pv. citri (strain 306).